Reading from the N-terminus, the 259-residue chain is MLPSTSVNSPAQGNGVLSSRDAARHTAGAKRYKYLRRLFRFRQMDFEFAAWQMLYLFTSPQRVYRNFHYRKQTKDQWARDDPAFLVLLSIWLCVSTIGFGFVLDMGFFETIKLLLWVVFIDCVGVGLLISTLMWFISNKYLVKRQSRDYDVEWGYAFDVHLNAFYPLLVILHFIQLFFINHVILTDTFIGYLVGNTLWLVAVGYYIYVTFLGYSALPFLKNTVILLYPFAPLILLYGLSLALGWNFTHTLCSFYKYRVK.

An N-acetylmethionine modification is found at methionine 1. Polar residues predominate over residues 1–17 (MLPSTSVNSPAQGNGVL). The segment at 1–22 (MLPSTSVNSPAQGNGVLSSRDA) is disordered. The Cytoplasmic portion of the chain corresponds to 1–82 (MLPSTSVNSP…TKDQWARDDP (82 aa)). Serine 6 is subject to Phosphoserine. A helical transmembrane segment spans residues 83–103 (AFLVLLSIWLCVSTIGFGFVL). Residues 104-115 (DMGFFETIKLLL) are Lumenal-facing. A helical membrane pass occupies residues 116–136 (WVVFIDCVGVGLLISTLMWFI). The Cytoplasmic portion of the chain corresponds to 137 to 163 (SNKYLVKRQSRDYDVEWGYAFDVHLNA). Residues 164–184 (FYPLLVILHFIQLFFINHVIL) form a helical membrane-spanning segment. The Lumenal portion of the chain corresponds to 185 to 187 (TDT). Residues 188–208 (FIGYLVGNTLWLVAVGYYIYV) form a helical membrane-spanning segment. Over 209–222 (TFLGYSALPFLKNT) the chain is Cytoplasmic. Residues 223–243 (VILLYPFAPLILLYGLSLALG) traverse the membrane as a helical segment. Over 244–259 (WNFTHTLCSFYKYRVK) the chain is Lumenal.

This sequence belongs to the unc-50 family.

It is found in the nucleus inner membrane. It localises to the golgi apparatus membrane. In terms of biological role, involved in the cell surface expression of neuronal nicotinic receptors. Binds RNA. This chain is Protein unc-50 homolog (UNC50), found in Bos taurus (Bovine).